We begin with the raw amino-acid sequence, 244 residues long: Exosome complex component Rrp41 (244 aa).

It belongs to the RNase PH family. Rrp41 subfamily. Component of the archaeal exosome complex. Forms a hexameric ring-like arrangement composed of 3 Rrp41-Rrp42 heterodimers. The hexameric ring associates with a trimer of Rrp4 and/or Csl4 subunits.

It is found in the cytoplasm. Functionally, catalytic component of the exosome, which is a complex involved in RNA degradation. Has 3'-&gt;5' exoribonuclease activity. Can also synthesize heteromeric RNA-tails. The sequence is that of Exosome complex component Rrp41 from Nitrosopumilus maritimus (strain SCM1).